The chain runs to 350 residues: GTPase Obg (350 aa).

The region spanning 1-158 (MFIDSVKITL…RLVRLELKLI (158 aa)) is the Obg domain. The 181-residue stretch at 159–339 (ADVGLVGFPN…LKFMLLEEIK (181 aa)) folds into the OBG-type G domain. GTP is bound by residues 165–172 (GFPNVGKS), 190–194 (FTTLT), 212–215 (DIPG), 280–283 (SKSD), and 320–322 (SSL). Mg(2+) is bound by residues Ser172 and Thr192.

This sequence belongs to the TRAFAC class OBG-HflX-like GTPase superfamily. OBG GTPase family. In terms of assembly, monomer. It depends on Mg(2+) as a cofactor.

The protein resides in the cytoplasm. In terms of biological role, an essential GTPase which binds GTP, GDP and possibly (p)ppGpp with moderate affinity, with high nucleotide exchange rates and a fairly low GTP hydrolysis rate. Plays a role in control of the cell cycle, stress response, ribosome biogenesis and in those bacteria that undergo differentiation, in morphogenesis control. The sequence is that of GTPase Obg from Campylobacter jejuni (strain RM1221).